A 367-amino-acid chain; its full sequence is Glutamate 5-kinase (367 aa).

Lys-9 contacts ATP. Substrate contacts are provided by Ser-49, Asp-136, and Asn-148. Residues 168 to 169 and 210 to 216 contribute to the ATP site; these read TD and TGGMKSK. Residues 276-350 enclose the PUA domain; sequence SGQIEVDAGA…GMQSQDIQVR (75 aa).

The protein belongs to the glutamate 5-kinase family.

It is found in the cytoplasm. It carries out the reaction L-glutamate + ATP = L-glutamyl 5-phosphate + ADP. The protein operates within amino-acid biosynthesis; L-proline biosynthesis; L-glutamate 5-semialdehyde from L-glutamate: step 1/2. In terms of biological role, catalyzes the transfer of a phosphate group to glutamate to form L-glutamate 5-phosphate. The polypeptide is Glutamate 5-kinase (Bacillus cereus (strain G9842)).